We begin with the raw amino-acid sequence, 210 residues long: Methylthioribulose-1-phosphate dehydratase (210 aa).

The Zn(2+) site is built by His-94 and His-96.

This sequence belongs to the aldolase class II family. MtnB subfamily. Zn(2+) is required as a cofactor.

The catalysed reaction is 5-(methylsulfanyl)-D-ribulose 1-phosphate = 5-methylsulfanyl-2,3-dioxopentyl phosphate + H2O. It functions in the pathway amino-acid biosynthesis; L-methionine biosynthesis via salvage pathway; L-methionine from S-methyl-5-thio-alpha-D-ribose 1-phosphate: step 2/6. Its function is as follows. Catalyzes the dehydration of methylthioribulose-1-phosphate (MTRu-1-P) into 2,3-diketo-5-methylthiopentyl-1-phosphate (DK-MTP-1-P). This Yersinia enterocolitica serotype O:8 / biotype 1B (strain NCTC 13174 / 8081) protein is Methylthioribulose-1-phosphate dehydratase.